The primary structure comprises 608 residues: Fatty acid amide hydrolase (608 aa).

Residues Lys206 and Ser282 each act as charge relay system in the active site. A substrate-binding site is contributed by Gly303 to Ser306. Ser306 functions as the Acyl-ester intermediate in the catalytic mechanism.

This sequence belongs to the amidase family. Forms homodimers.

Its subcellular location is the endoplasmic reticulum membrane. It is found in the cell membrane. The catalysed reaction is N-(9Z,12Z-octadecadienoyl)-ethanolamine + H2O = ethanolamine + (9Z,12Z)-octadecadienoate. The enzyme catalyses N-hexadecanoylethanolamine + H2O = ethanolamine + hexadecanoate. It catalyses the reaction N-dodecanoylethanolamine + H2O = dodecanoate + ethanolamine. Its activity is regulated as follows. Inhibited by methyl arachidonyl fluorophosphonate (MAFP). Its function is as follows. Catalyzes the hydrolysis of bioactive endogenous fatty acid amides to their corresponding acids. The hydrolysis of endogenous amidated lipids terminates their participation as lipid mediators in various signaling systems. Converts a wide range of N-acylethanolamines (NAEs) to their corresponding free fatty acids and ethanolamine. This chain is Fatty acid amide hydrolase, found in Oryza sativa subsp. japonica (Rice).